The chain runs to 126 residues: Fluoride-specific ion channel FluC (126 aa).

4 helical membrane-spanning segments follow: residues 5 to 25 (ILCV…FYFG), 34 to 54 (YIFI…GFVL), 71 to 91 (VTGL…NAVF), and 100 to 120 (FFLN…LGIY). Gly76 and Thr79 together coordinate Na(+).

It belongs to the fluoride channel Fluc/FEX (TC 1.A.43) family.

The protein localises to the cell inner membrane. It catalyses the reaction fluoride(in) = fluoride(out). Na(+) is not transported, but it plays an essential structural role and its presence is essential for fluoride channel function. Fluoride-specific ion channel. Important for reducing fluoride concentration in the cell, thus reducing its toxicity. The protein is Fluoride-specific ion channel FluC of Campylobacter hominis (strain ATCC BAA-381 / DSM 21671 / CCUG 45161 / LMG 19568 / NCTC 13146 / CH001A).